The following is a 97-amino-acid chain: Defective intron-associated endonuclease 3 (97 aa).

This endonuclease is specific to the nrdB gene splice junction and is involved in intron homing. The chain is Defective intron-associated endonuclease 3 (ITEVIIIR) from Escherichia coli (Bacteriophage T4).